Reading from the N-terminus, the 540-residue chain is Chaperonin GroEL 1 (540 aa).

ATP is bound by residues 29–32, 86–90, G415, 479–481, and D495; these read TIGP, DGTTT, and NAA.

The protein belongs to the chaperonin (HSP60) family. In terms of assembly, forms a cylinder of 14 subunits composed of two heptameric rings stacked back-to-back. Interacts with the co-chaperonin GroES.

The protein resides in the cytoplasm. It carries out the reaction ATP + H2O + a folded polypeptide = ADP + phosphate + an unfolded polypeptide.. In terms of biological role, together with its co-chaperonin GroES, plays an essential role in assisting protein folding. The GroEL-GroES system forms a nano-cage that allows encapsulation of the non-native substrate proteins and provides a physical environment optimized to promote and accelerate protein folding. This Streptomyces albus G protein is Chaperonin GroEL 1.